A 687-amino-acid chain; its full sequence is ERI1 exoribonuclease 2 (687 aa).

Residues Leu38 to Ala226 enclose the Exonuclease domain. 3 residues coordinate Mg(2+): Asp42, Glu44, and Asp156. Catalysis depends on Glu44, which acts as the Proton acceptor. Glu44 is a binding site for AMP. The active-site Proton acceptor is the His213. Position 213 (His213) interacts with AMP. Mg(2+) is bound at residue Asp218. Residues Cys595, Cys597, Cys620, and Cys633 each coordinate Zn(2+). The GRF-type zinc finger occupies Cys595–Val642.

It belongs to the ERI2 family. Mg(2+) serves as cofactor.

The sequence is that of ERI1 exoribonuclease 2 (eri2) from Xenopus laevis (African clawed frog).